The chain runs to 272 residues: Protein STAY-GREEN 1, chloroplastic (272 aa).

The N-terminal 50 residues, 1–50 (MGTLTTSLVVPSKLNNEQQSSIFIHKTRRKCKKNQSIVPVARLFGPAIFE), are a transit peptide targeting the chloroplast. The tract at residues 201–222 (TSPSSSSGGVGGVKSTSFTSNS) is disordered.

Belongs to the staygreen family. As to quaternary structure, interacts with PSY1.

The protein resides in the plastid. It is found in the chloroplast. Its function is as follows. Required to trigger chlorophyll degradation during leaf senescence and fruit ripening. Binds directly PSY1 to regulate the accumulation of lycopene and beta-carotene in the maturing fruits. The protein is Protein STAY-GREEN 1, chloroplastic of Solanum lycopersicum (Tomato).